We begin with the raw amino-acid sequence, 556 residues long: Phenylalanine--tRNA ligase beta subunit (556 aa).

A B5 domain is found at 278–353 (LTPKEFEVEL…IAYGYNNIEP (76 aa)). Mg(2+)-binding residues include Asp331, Asp337, Glu340, and Asp341.

Belongs to the phenylalanyl-tRNA synthetase beta subunit family. Type 2 subfamily. As to quaternary structure, tetramer of two alpha and two beta subunits. It depends on Mg(2+) as a cofactor.

It localises to the cytoplasm. The enzyme catalyses tRNA(Phe) + L-phenylalanine + ATP = L-phenylalanyl-tRNA(Phe) + AMP + diphosphate + H(+). This Pyrococcus horikoshii (strain ATCC 700860 / DSM 12428 / JCM 9974 / NBRC 100139 / OT-3) protein is Phenylalanine--tRNA ligase beta subunit.